Reading from the N-terminus, the 1258-residue chain is Cohesin subunit SA-1 (1258 aa).

The tract at residues 1-59 (MITSELPVLQDSTNETTAHSDAGSELEETEVKGKRKRGRPGRPPSTNKKPRKSPGEKSR) is disordered. A compositionally biased stretch (polar residues) spans 10 to 19 (QDSTNETTAH). Residue S24 is modified to Phosphoserine. The SCD domain occupies 296 to 381 (FVHRYRDAIA…NRFKDRIVSM (86 aa)). A phosphoserine mark is found at S756, S1062, and S1065. Positions 1055-1148 (GGEDDRMSVN…EHGSEPDFLH (94 aa)) are disordered. The span at 1062-1075 (SVNSGSSSSKTSSV) shows a compositional bias: low complexity. Basic residues predominate over residues 1076 to 1087 (RSKKGRPPLHRK). Position 1093 is a phosphoserine (S1093). Residues 1095-1106 (DNTWLNRTDTMI) show a composition bias toward polar residues. Basic and acidic residues predominate over residues 1137–1146 (ESEHGSEPDF). A Glycyl lysine isopeptide (Lys-Gly) (interchain with G-Cter in SUMO2) cross-link involves residue K1161.

The protein belongs to the SCC3 family. In terms of assembly, cohesin complexes are composed of a heterodimer between a SMC1 protein (SMC1A or SMC1B) and SMC3, which are attached via their hinge domain, and RAD21 which link them at their heads, and one STAG protein (STAG1, STAG2 or STAG3). In cohesin complexes, STAG1 is mutually exclusive with STAG2 and STAG3. Interacts directly with RAD21 in cohesin complex. The cohesin complex interacts with the cohesin loading complex subunits NIPBL/Scc2 (via HEAT repeats) and MAU2/Scc4. NIPBL directly contacts all members of the complex, RAD21, SMC1A/B, SMC3 and STAG1. In terms of processing, phosphorylated by PLK1. The large dissociation of cohesin from chromosome arms during prophase is partly due to its phosphorylation.

It is found in the nucleus. The protein localises to the chromosome. Component of cohesin complex, a complex required for the cohesion of sister chromatids after DNA replication. The cohesin complex apparently forms a large proteinaceous ring within which sister chromatids can be trapped. At anaphase, the complex is cleaved and dissociates from chromatin, allowing sister chromatids to segregate. The cohesin complex may also play a role in spindle pole assembly during mitosis. This is Cohesin subunit SA-1 (Stag1) from Mus musculus (Mouse).